We begin with the raw amino-acid sequence, 434 residues long: Glutamate/glutamine/aspartate/asparagine transport system permease protein BztC (434 aa).

The next 10 helical transmembrane spans lie at 41–61 (LTVFGLLATVWLVQAAAPWLL), 113–133 (LFVTFAGLFLALAPVLFDALP), 135–155 (KLIWGTLLYPLAAFWLLWGGP), 156–176 (IWGPVSVLAGFAILGLLFTAL), 180–200 (LGVPVSAGIGLVVAALFWLYA), 227–247 (FLLALVIGVTAIVVSLPLGIL), 272–292 (GVPLITLLFTASLLLQYFLPP), 298–318 (LILRVVILVTLFAAAYIAEVI), 360–380 (IVSSFIGLFKDTTLVAFVGLF), and 398–418 (GTYWEPYIFVALIFFLFNFSM). The 196-residue stretch at 227 to 422 (FLLALVIGVT…LFNFSMSRYS (196 aa)) folds into the ABC transmembrane type-1 domain.

The protein belongs to the binding-protein-dependent transport system permease family. HisMQ subfamily. BztB and BztC form a heterodimer which can form a membrane complex with a homodimer of BztD.

Its subcellular location is the cell inner membrane. Its function is as follows. Part of a binding-protein-dependent transport system for glutamate, glutamine, aspartate and asparagine. Probably responsible for the translocation of the substrate across the membrane. In Rhodobacter capsulatus (strain ATCC BAA-309 / NBRC 16581 / SB1003), this protein is Glutamate/glutamine/aspartate/asparagine transport system permease protein BztC (bztC).